A 254-amino-acid chain; its full sequence is Type III pantothenate kinase (254 aa).

6–13 (DVGNTNIV) serves as a coordination point for ATP. 107–110 (GADR) is a substrate binding site. Aspartate 109 (proton acceptor) is an active-site residue. Residue aspartate 129 participates in K(+) binding. An ATP-binding site is contributed by threonine 132. A substrate-binding site is contributed by threonine 184.

This sequence belongs to the type III pantothenate kinase family. As to quaternary structure, homodimer. The cofactor is NH4(+). It depends on K(+) as a cofactor.

It localises to the cytoplasm. It carries out the reaction (R)-pantothenate + ATP = (R)-4'-phosphopantothenate + ADP + H(+). It participates in cofactor biosynthesis; coenzyme A biosynthesis; CoA from (R)-pantothenate: step 1/5. In terms of biological role, catalyzes the phosphorylation of pantothenate (Pan), the first step in CoA biosynthesis. The protein is Type III pantothenate kinase of Exiguobacterium sp. (strain ATCC BAA-1283 / AT1b).